The following is a 610-amino-acid chain: Zinc metalloproteinase-disintegrin-like brevilysin H6 (610 aa).

The N-terminal stretch at 1 to 20 (MIQVLLVTICLAAFPYQGSS) is a signal peptide. Positions 21-191 (IILESGNVND…ASQLNLTPEQ (171 aa)) are excised as a propeptide. Q192 is modified (pyrrolidone carboxylic acid). Residues 198–394 (RFVELVLVAD…HNPECIVNEP (197 aa)) enclose the Peptidase M12B domain. Ca(2+) is bound by residues E201 and D285. Intrachain disulfides connect C309-C389, C349-C373, C351-C356, and C373-C378. H334 serves as a coordination point for Zn(2+). The active site involves E335. Positions 338 and 344 each coordinate Zn(2+). N372 is a glycosylation site (N-linked (GlcNAc...) asparagine). 8 residues coordinate Ca(2+): C389, N392, V404, N407, L409, E411, E414, and D417. In terms of domain architecture, Disintegrin spans 402–488 (PPVCGNELLE…ECPADVFHKN (87 aa)). Disulfide bonds link C405/C424, C405/C434, C416/C429, C416/C434, C418/C424, C428/C451, C442/C448, C447/C473, C460/C480, C467/C492, C467/C499, C492/C504, C499/C504, C511/C526, C511/C561, C526/C572, C539/C549, C549/C556, C556/C598, C561/C572, C592/C603, and C598/C603. The short motif at 466-468 (ECD) is the D/ECD-tripeptide element. 5 residues coordinate Ca(2+): D468, P469, E471, D483, and V484.

The protein belongs to the venom metalloproteinase (M12B) family. P-III subfamily. P-IIIb sub-subfamily. Monomer. The cofactor is Zn(2+). In the absence of calcium ions, is autocatalytically degraded giving 29 (p29K) and 45 kDa (p45K) fragments. In presence of calcium ions, the p45K is not detected. In terms of tissue distribution, expressed by the venom gland.

It is found in the secreted. Its activity is regulated as follows. Inhibited by chelating agents. Calcium ions enhance its activity, they also suppress autoproteolysis, and contribute to the stability of the enzyme against pH, heating, urea and cysteine. Shows weak hemorrhagic activity. Rapidly degrades the alpha-chain of fibrinogen (FGA). In Gloydius brevicauda (Korean slamosa snake), this protein is Zinc metalloproteinase-disintegrin-like brevilysin H6.